The chain runs to 440 residues: Transposon Ty1-DR3 Gag polyprotein (440 aa).

Polar residues-rich tracts occupy residues 1–10 (MESQQLSNYP), 48–60 (TKAN…TPAS), and 127–152 (QSQF…GNTF). Disordered stretches follow at residues 1–93 (MESQ…MMTQ), 126–173 (PQSQ…RPPP), and 352–440 (GSRN…PETY). Low complexity predominate over residues 153–165 (TDSSSADSDMTST). The interval 299-401 (NNGIHINNKV…NSKSKTARAH (103 aa)) is RNA-binding. Positions 402–428 (NVSTSINSPSTDNDSISKSTTEPIQLN) are enriched in polar residues. S416 bears the Phosphoserine mark. Residues 429 to 440 (NKHDLHLRPETY) are compositionally biased toward basic and acidic residues.

In terms of assembly, homotrimer.

The protein resides in the cytoplasm. In terms of biological role, capsid protein (CA) is the structural component of the virus-like particle (VLP), forming the shell that encapsulates the retrotransposons dimeric RNA genome. The particles are assembled from trimer-clustered units and there are holes in the capsid shells that allow for the diffusion of macromolecules. CA also has nucleocapsid-like chaperone activity, promoting primer tRNA(i)-Met annealing to the multipartite primer-binding site (PBS), dimerization of Ty1 RNA and initiation of reverse transcription. The chain is Transposon Ty1-DR3 Gag polyprotein (TY1A-DR3) from Saccharomyces cerevisiae (strain ATCC 204508 / S288c) (Baker's yeast).